We begin with the raw amino-acid sequence, 445 residues long: Phosphoglucosamine mutase (445 aa).

S102 functions as the Phosphoserine intermediate in the catalytic mechanism. Positions 102, 241, 243, and 245 each coordinate Mg(2+). A Phosphoserine modification is found at S102.

The protein belongs to the phosphohexose mutase family. Mg(2+) serves as cofactor. Activated by phosphorylation.

The enzyme catalyses alpha-D-glucosamine 1-phosphate = D-glucosamine 6-phosphate. Functionally, catalyzes the conversion of glucosamine-6-phosphate to glucosamine-1-phosphate. In Rhodococcus opacus (strain B4), this protein is Phosphoglucosamine mutase.